Here is a 1773-residue protein sequence, read N- to C-terminus: Mucin-22 (1773 aa).

The first 26 residues, 1–26 (MRRGNISPAFWFLWLLLFGLLGPSSE), serve as a signal peptide directing secretion. The Extracellular segment spans residues 27–1660 (NTTAFTKGSD…VIKPSGYLQP (1634 aa)). Disordered stretches follow at residues 61–102 (TGSK…TDSG), 176–357 (TMAS…SETT), 372–405 (MGSE…VGSE), 434–572 (SETI…STAS), 590–674 (TVGS…EGSE), 754–1026 (DTTT…ETTM), 1064–1485 (TTIA…GSET), and 1603–1639 (MGAS…SMGT). Residues 153–1514 (MASSTTSTAG…PTATSLTGSE (1362 aa)) are 124 X 10 AA approximate repeats. Residues 178–243 (ASTTGSETAT…GSEATTTSTA (66 aa)) are compositionally biased toward low complexity. Residues 248–258 (ITASSMSSETT) show a composition bias toward polar residues. A compositionally biased stretch (low complexity) spans 262-357 (AAGSNTTTAS…TVSTAGSETT (96 aa)). Low complexity-rich tracts occupy residues 440–481 (STAG…AAST) and 490–546 (STAG…SEPT). Positions 547 to 572 (MASTMGSETTMASTIGPETTKVSTAS) are enriched in polar residues. Low complexity-rich tracts occupy residues 755–1025 (TTTA…SETT) and 1064–1465 (TTIA…GSET). Polar residues-rich tracts occupy residues 1466–1485 (NTAC…GSET) and 1615–1639 (RTTT…SMGT). The helical transmembrane segment at 1661–1681 (WAIILISLAAVVAAVGLSVGL) threads the bilayer. The Cytoplasmic segment spans residues 1682 to 1773 (SFCLRNLFFP…GGHYGHGGGH (92 aa)).

As to expression, expressed in lung by serous cells of the submucosal gland (at protein level). Detected in the placenta, lung and testis.

It localises to the membrane. This Homo sapiens (Human) protein is Mucin-22 (MUC22).